The primary structure comprises 214 residues: Outer-membrane lipoprotein carrier protein (214 aa).

Positions 1 to 24 (MKIKLAFAVLLALCLSLSVMPVLA) are cleaved as a signal peptide.

Belongs to the LolA family. In terms of assembly, monomer.

The protein localises to the periplasm. Participates in the translocation of lipoproteins from the inner membrane to the outer membrane. Only forms a complex with a lipoprotein if the residue after the N-terminal Cys is not an aspartate (The Asp acts as a targeting signal to indicate that the lipoprotein should stay in the inner membrane). The chain is Outer-membrane lipoprotein carrier protein from Alkalilimnicola ehrlichii (strain ATCC BAA-1101 / DSM 17681 / MLHE-1).